The primary structure comprises 330 residues: ADP-L-glycero-D-manno-heptose-6-epimerase (330 aa).

NADP(+)-binding positions include 11-12, 32-33, Lys-39, Lys-54, 75-79, and Asn-92; these read FI, DN, and EGACS. The Proton acceptor role is filled by Tyr-139. An NADP(+)-binding site is contributed by Lys-143. Residue Asn-168 participates in substrate binding. NADP(+)-binding residues include Val-169 and Lys-177. The Proton acceptor role is filled by Lys-177. Residues Arg-179, His-186, 200–203, Arg-213, and Tyr-292 each bind substrate; that span reads FGEY.

This sequence belongs to the NAD(P)-dependent epimerase/dehydratase family. HldD subfamily. Homopentamer. NADP(+) serves as cofactor.

The enzyme catalyses ADP-D-glycero-beta-D-manno-heptose = ADP-L-glycero-beta-D-manno-heptose. The protein operates within nucleotide-sugar biosynthesis; ADP-L-glycero-beta-D-manno-heptose biosynthesis; ADP-L-glycero-beta-D-manno-heptose from D-glycero-beta-D-manno-heptose 7-phosphate: step 4/4. In terms of biological role, catalyzes the interconversion between ADP-D-glycero-beta-D-manno-heptose and ADP-L-glycero-beta-D-manno-heptose via an epimerization at carbon 6 of the heptose. The chain is ADP-L-glycero-D-manno-heptose-6-epimerase from Burkholderia thailandensis (strain ATCC 700388 / DSM 13276 / CCUG 48851 / CIP 106301 / E264).